The following is a 69-amino-acid chain: Large ribosomal subunit protein bL31 (69 aa).

Zn(2+) contacts are provided by Cys-17, Cys-19, Cys-37, and Cys-40.

Belongs to the bacterial ribosomal protein bL31 family. Type A subfamily. Part of the 50S ribosomal subunit. The cofactor is Zn(2+).

Functionally, binds the 23S rRNA. The sequence is that of Large ribosomal subunit protein bL31 from Caldicellulosiruptor saccharolyticus (strain ATCC 43494 / DSM 8903 / Tp8T 6331).